The primary structure comprises 639 residues: Chaperone protein DnaK 1 (639 aa).

Thr199 carries the phosphothreonine; by autocatalysis modification. The span at 603–612 shows a compositional bias: low complexity; that stretch reads QQQAQAQQAP. Positions 603–639 are disordered; sequence QQQAQAQQAPGGEGEQEAKQDDNVVDAEFEEVKDEKK. Residues 625–639 show a composition bias toward acidic residues; the sequence is NVVDAEFEEVKDEKK.

The protein belongs to the heat shock protein 70 family.

In terms of biological role, acts as a chaperone. In Photobacterium profundum (strain SS9), this protein is Chaperone protein DnaK 1.